Here is a 72-residue protein sequence, read N- to C-terminus: DNA-directed RNA polymerase subunit omega (72 aa).

This sequence belongs to the RNA polymerase subunit omega family. The RNAP catalytic core consists of 2 alpha, 1 beta, 1 beta' and 1 omega subunit. When a sigma factor is associated with the core the holoenzyme is formed, which can initiate transcription.

The catalysed reaction is RNA(n) + a ribonucleoside 5'-triphosphate = RNA(n+1) + diphosphate. Its function is as follows. Promotes RNA polymerase assembly. Latches the N- and C-terminal regions of the beta' subunit thereby facilitating its interaction with the beta and alpha subunits. The chain is DNA-directed RNA polymerase subunit omega from Laribacter hongkongensis (strain HLHK9).